The primary structure comprises 285 residues: Acetyl-coenzyme A carboxylase carboxyl transferase subunit beta (285 aa).

Residues 33–285 enclose the CoA carboxyltransferase N-terminal domain; it reads MWIKCSKCGK…TLGNILRMHS (253 aa). Positions 37, 40, 56, and 59 each coordinate Zn(2+). A C4-type zinc finger spans residues 37–59; that stretch reads CSKCGKILYKSDVDDNFKVCPKC.

It belongs to the AccD/PCCB family. In terms of assembly, acetyl-CoA carboxylase is a heterohexamer composed of biotin carboxyl carrier protein (AccB), biotin carboxylase (AccC) and two subunits each of ACCase subunit alpha (AccA) and ACCase subunit beta (AccD). The cofactor is Zn(2+).

It is found in the cytoplasm. The enzyme catalyses N(6)-carboxybiotinyl-L-lysyl-[protein] + acetyl-CoA = N(6)-biotinyl-L-lysyl-[protein] + malonyl-CoA. The protein operates within lipid metabolism; malonyl-CoA biosynthesis; malonyl-CoA from acetyl-CoA: step 1/1. Functionally, component of the acetyl coenzyme A carboxylase (ACC) complex. Biotin carboxylase (BC) catalyzes the carboxylation of biotin on its carrier protein (BCCP) and then the CO(2) group is transferred by the transcarboxylase to acetyl-CoA to form malonyl-CoA. This chain is Acetyl-coenzyme A carboxylase carboxyl transferase subunit beta, found in Clostridium acetobutylicum (strain ATCC 824 / DSM 792 / JCM 1419 / IAM 19013 / LMG 5710 / NBRC 13948 / NRRL B-527 / VKM B-1787 / 2291 / W).